A 419-amino-acid chain; its full sequence is ATP-dependent RNA helicase RhlB (419 aa).

Positions 9 to 37 match the Q motif motif; the sequence is QRFSDLALHRSVQQAIKEKGFEFCTPIQA. The 178-residue stretch at 40–217 folds into the Helicase ATP-binding domain; that stretch reads LPITLKGQDI…FEHMNDPQYV (178 aa). 53-60 lines the ATP pocket; the sequence is AQTGTGKT. A DEAD box motif is present at residues 163–166; that stretch reads DEAD. Residues 241–388 enclose the Helicase C-terminal domain; it reads KMALLMTLLE…VSQYDAKALI (148 aa).

The protein belongs to the DEAD box helicase family. RhlB subfamily. In terms of assembly, component of the RNA degradosome, which is a multiprotein complex involved in RNA processing and mRNA degradation.

It is found in the cytoplasm. It carries out the reaction ATP + H2O = ADP + phosphate + H(+). Its function is as follows. DEAD-box RNA helicase involved in RNA degradation. Has RNA-dependent ATPase activity and unwinds double-stranded RNA. The protein is ATP-dependent RNA helicase RhlB of Histophilus somni (strain 129Pt) (Haemophilus somnus).